A 307-amino-acid polypeptide reads, in one-letter code: Serine/threonine-protein phosphatase PP2A-2 catalytic subunit (307 aa).

Positions 55, 57, 83, and 115 each coordinate Mn(2+). Catalysis depends on H116, which acts as the Proton donor. 2 residues coordinate Mn(2+): H165 and H239.

It belongs to the PPP phosphatase family. PP-2A subfamily. It depends on Mn(2+) as a cofactor.

Its subcellular location is the cytoplasm. It carries out the reaction O-phospho-L-seryl-[protein] + H2O = L-seryl-[protein] + phosphate. It catalyses the reaction O-phospho-L-threonyl-[protein] + H2O = L-threonyl-[protein] + phosphate. The protein is Serine/threonine-protein phosphatase PP2A-2 catalytic subunit (PP2A2) of Oryza sativa subsp. indica (Rice).